We begin with the raw amino-acid sequence, 173 residues long: Lipoprotein signal peptidase (173 aa).

The next 4 helical transmembrane spans lie at 14-34 (LAWL…KYYF), 44-64 (IIVI…AAFS), 72-92 (WQRW…VVWL), and 98-118 (DDTW…GNLY). Active-site residues include Asp128 and Asp147. The helical transmembrane segment at 139 to 159 (YFPAFNVADSAITVGAIMLAL) threads the bilayer.

The protein belongs to the peptidase A8 family.

It is found in the cell inner membrane. The catalysed reaction is Release of signal peptides from bacterial membrane prolipoproteins. Hydrolyzes -Xaa-Yaa-Zaa-|-(S,diacylglyceryl)Cys-, in which Xaa is hydrophobic (preferably Leu), and Yaa (Ala or Ser) and Zaa (Gly or Ala) have small, neutral side chains.. Its pathway is protein modification; lipoprotein biosynthesis (signal peptide cleavage). Its function is as follows. This protein specifically catalyzes the removal of signal peptides from prolipoproteins. This Pseudomonas syringae pv. tomato (strain ATCC BAA-871 / DC3000) protein is Lipoprotein signal peptidase.